The primary structure comprises 167 residues: Glucose-6-phosphate isomerase (167 aa).

Glutamate 54 functions as the Proton donor in the catalytic mechanism. Histidine 85 is an active-site residue.

This sequence belongs to the GPI family.

The protein localises to the cytoplasm. It catalyses the reaction alpha-D-glucose 6-phosphate = beta-D-fructose 6-phosphate. It participates in carbohydrate biosynthesis; gluconeogenesis. It functions in the pathway carbohydrate degradation; glycolysis; D-glyceraldehyde 3-phosphate and glycerone phosphate from D-glucose: step 2/4. In terms of biological role, catalyzes the reversible isomerization of glucose-6-phosphate to fructose-6-phosphate. This chain is Glucose-6-phosphate isomerase, found in Klebsiella oxytoca.